Reading from the N-terminus, the 219-residue chain is Ribose-5-phosphate isomerase A (219 aa).

Residues threonine 28–threonine 31, aspartate 81–aspartate 84, and lysine 94–glycine 97 contribute to the substrate site. Catalysis depends on glutamate 103, which acts as the Proton acceptor. Lysine 121 lines the substrate pocket.

The protein belongs to the ribose 5-phosphate isomerase family. As to quaternary structure, homodimer.

The catalysed reaction is aldehydo-D-ribose 5-phosphate = D-ribulose 5-phosphate. Its pathway is carbohydrate degradation; pentose phosphate pathway; D-ribose 5-phosphate from D-ribulose 5-phosphate (non-oxidative stage): step 1/1. Catalyzes the reversible conversion of ribose-5-phosphate to ribulose 5-phosphate. This chain is Ribose-5-phosphate isomerase A, found in Acidithiobacillus ferrooxidans (strain ATCC 23270 / DSM 14882 / CIP 104768 / NCIMB 8455) (Ferrobacillus ferrooxidans (strain ATCC 23270)).